A 379-amino-acid chain; its full sequence is Cytochrome b (379 aa).

The next 4 membrane-spanning stretches (helical) occupy residues Phe33–Met53, Trp77–Ile98, Trp113–Leu133, and Phe178–Leu198. Heme b contacts are provided by His83 and His97. Positions 182 and 196 each coordinate heme b. Residue His201 participates in a ubiquinone binding. A run of 4 helical transmembrane segments spans residues Thr226–Phe246, Met288–Gln308, Ile320–Gly340, and Phe347–Pro367.

It belongs to the cytochrome b family. In terms of assembly, the cytochrome bc1 complex contains 11 subunits: 3 respiratory subunits (MT-CYB, CYC1 and UQCRFS1), 2 core proteins (UQCRC1 and UQCRC2) and 6 low-molecular weight proteins (UQCRH/QCR6, UQCRB/QCR7, UQCRQ/QCR8, UQCR10/QCR9, UQCR11/QCR10 and a cleavage product of UQCRFS1). This cytochrome bc1 complex then forms a dimer. Heme b serves as cofactor.

It localises to the mitochondrion inner membrane. Component of the ubiquinol-cytochrome c reductase complex (complex III or cytochrome b-c1 complex) that is part of the mitochondrial respiratory chain. The b-c1 complex mediates electron transfer from ubiquinol to cytochrome c. Contributes to the generation of a proton gradient across the mitochondrial membrane that is then used for ATP synthesis. The chain is Cytochrome b (MT-CYB) from Dipodomys ordii (Ord's kangaroo rat).